The primary structure comprises 499 residues: Cytochrome P450 2M1 (499 aa).

Cysteine 441 lines the heme pocket.

Belongs to the cytochrome P450 family. Requires heme as cofactor. In terms of tissue distribution, in kidney and in liver from juvenile and sexually mature trout from both sexes.

It localises to the endoplasmic reticulum membrane. Its subcellular location is the microsome membrane. The catalysed reaction is an organic molecule + reduced [NADPH--hemoprotein reductase] + O2 = an alcohol + oxidized [NADPH--hemoprotein reductase] + H2O + H(+). In terms of biological role, has (omega-6)-hydroxylation activity toward lauric acid. This is Cytochrome P450 2M1 (cyp2m1) from Oncorhynchus mykiss (Rainbow trout).